We begin with the raw amino-acid sequence, 75 residues long: Conotoxin Vc6.15 (75 aa).

Positions 1 to 19 (MEKLTILLHVAAVLMSTQA) are cleaved as a signal peptide. Positions 20–41 (LIQEQRQKAKINLFSKRKPSAE) are excised as a propeptide. 3 disulfide bridges follow: cysteine 49–cysteine 62, cysteine 55–cysteine 66, and cysteine 61–cysteine 71.

It belongs to the conotoxin O2 superfamily. In terms of tissue distribution, expressed by the venom duct.

It is found in the secreted. Inhibits voltage-gated ion channels. The protein is Conotoxin Vc6.15 of Conus victoriae (Queen Victoria cone).